A 287-amino-acid polypeptide reads, in one-letter code: S-methyl-5'-thioadenosine phosphorylase (287 aa).

Residues T13 and 55-56 (RH) contribute to the phosphate site. A substrate-binding site is contributed by M186. T187 is a phosphate binding site. 210–212 (DYD) is a binding site for substrate.

Belongs to the PNP/MTAP phosphorylase family. MTAP subfamily. Homohexamer. Dimer of a homotrimer.

The catalysed reaction is S-methyl-5'-thioadenosine + phosphate = 5-(methylsulfanyl)-alpha-D-ribose 1-phosphate + adenine. The protein operates within amino-acid biosynthesis; L-methionine biosynthesis via salvage pathway; S-methyl-5-thio-alpha-D-ribose 1-phosphate from S-methyl-5'-thioadenosine (phosphorylase route): step 1/1. In terms of biological role, catalyzes the reversible phosphorylation of S-methyl-5'-thioadenosine (MTA) to adenine and 5-methylthioribose-1-phosphate. Involved in the breakdown of MTA, a major by-product of polyamine biosynthesis. Responsible for the first step in the methionine salvage pathway after MTA has been generated from S-adenosylmethionine. Has broad substrate specificity with 6-aminopurine nucleosides as preferred substrates. This chain is S-methyl-5'-thioadenosine phosphorylase, found in Leptospira interrogans serogroup Icterohaemorrhagiae serovar copenhageni (strain Fiocruz L1-130).